The primary structure comprises 248 residues: Probable transcriptional regulatory protein AZC_0510 (248 aa).

The protein belongs to the TACO1 family.

The protein localises to the cytoplasm. This is Probable transcriptional regulatory protein AZC_0510 from Azorhizobium caulinodans (strain ATCC 43989 / DSM 5975 / JCM 20966 / LMG 6465 / NBRC 14845 / NCIMB 13405 / ORS 571).